We begin with the raw amino-acid sequence, 235 residues long: Uridylate kinase (235 aa).

9–12 lines the ATP pocket; the sequence is KLSG. The tract at residues 17–22 is involved in allosteric activation by GTP; that stretch reads GNQGYG. G51 contacts UMP. ATP-binding residues include G52 and R56. Residues D71 and 132-139 each bind UMP; that span reads CGNPFFTT. ATP contacts are provided by T159, Y165, and D168.

The protein belongs to the UMP kinase family. As to quaternary structure, homohexamer.

The protein localises to the cytoplasm. The catalysed reaction is UMP + ATP = UDP + ADP. The protein operates within pyrimidine metabolism; CTP biosynthesis via de novo pathway; UDP from UMP (UMPK route): step 1/1. Allosterically activated by GTP. Inhibited by UTP. Catalyzes the reversible phosphorylation of UMP to UDP. In Synechococcus sp. (strain CC9311), this protein is Uridylate kinase.